A 280-amino-acid chain; its full sequence is MSLTTALTYALPHRLLSSMARSLAYSDDPRVSRWLIDTVTRKFNVNLDEAANPDPRSYATFNQFFTRALKPGARVADADPRSLVMPADGRISQLGRIEAGRIFQAKGQSFTAAELLGSDEDAKPYNDGLYATVYLSPRDYHRVHMPWTGTLRETVHVPGRLFSVGPAAVNGVPRLFARNERLVCHFDTSFGPMVSVMVGALLVSGVETVWSGEEIPAYGDRITRKDYRGQGIQLERFAEMARFNYGSTVIVLLPPGVAEFAPQLGAESPVQLGQALAKLR.

Residues D88, H144, and S247 each act as charge relay system; for autoendoproteolytic cleavage activity in the active site. S247 serves as the catalytic Schiff-base intermediate with substrate; via pyruvic acid; for decarboxylase activity. Residue S247 is modified to Pyruvic acid (Ser); by autocatalysis.

It belongs to the phosphatidylserine decarboxylase family. PSD-B subfamily. Prokaryotic type I sub-subfamily. As to quaternary structure, heterodimer of a large membrane-associated beta subunit and a small pyruvoyl-containing alpha subunit. Pyruvate serves as cofactor. Is synthesized initially as an inactive proenzyme. Formation of the active enzyme involves a self-maturation process in which the active site pyruvoyl group is generated from an internal serine residue via an autocatalytic post-translational modification. Two non-identical subunits are generated from the proenzyme in this reaction, and the pyruvate is formed at the N-terminus of the alpha chain, which is derived from the carboxyl end of the proenzyme. The autoendoproteolytic cleavage occurs by a canonical serine protease mechanism, in which the side chain hydroxyl group of the serine supplies its oxygen atom to form the C-terminus of the beta chain, while the remainder of the serine residue undergoes an oxidative deamination to produce ammonia and the pyruvoyl prosthetic group on the alpha chain. During this reaction, the Ser that is part of the protease active site of the proenzyme becomes the pyruvoyl prosthetic group, which constitutes an essential element of the active site of the mature decarboxylase.

Its subcellular location is the cell membrane. It carries out the reaction a 1,2-diacyl-sn-glycero-3-phospho-L-serine + H(+) = a 1,2-diacyl-sn-glycero-3-phosphoethanolamine + CO2. The protein operates within phospholipid metabolism; phosphatidylethanolamine biosynthesis; phosphatidylethanolamine from CDP-diacylglycerol: step 2/2. Its function is as follows. Catalyzes the formation of phosphatidylethanolamine (PtdEtn) from phosphatidylserine (PtdSer). The polypeptide is Phosphatidylserine decarboxylase proenzyme (Stenotrophomonas maltophilia (strain R551-3)).